The following is a 269-amino-acid chain: Protein BASIC PENTACYSTEINE3 (269 aa).

The protein belongs to the BBR/BPC family. Expressed in seedlings, leaves and pistils. Detected in the base of flowers and tips of carpels, in petal vasculature, in anthers, in young rosette, in the lateral and primary roots, and in the gynobasal portion of the ovule.

The protein localises to the nucleus. Functionally, transcriptional regulator that specifically binds to GA-rich elements (GAGA-repeats) present in regulatory sequences of genes involved in developmental processes. This is Protein BASIC PENTACYSTEINE3 (BPC3) from Arabidopsis thaliana (Mouse-ear cress).